We begin with the raw amino-acid sequence, 222 residues long: Vespryn (222 aa).

The N-terminal stretch at 1 to 44 (MSPSAGLQFSLYFLQTKKVLWKLTDKEKGLCYILLFTLCFFADQ) is a signal peptide. Residues 45 to 52 (ENGGKALA) constitute a propeptide that is removed on maturation. A B30.2/SPRY domain is found at 53–159 (SPPGIWKRAD…RIWQMGLWWL (107 aa)). The propeptide occupies 160–222 (RHLETDPGRV…LGGTVSLTTL (63 aa)). N195 carries an N-linked (GlcNAc...) asparagine glycan.

The protein belongs to the ohanin/vespryn family. In terms of tissue distribution, expressed by the venom gland.

The protein resides in the secreted. Functionally, neurotoxin that produces dose-dependent hypolocomotion and hyperalgesia in mice. May directly act on the central nervous system, as it is 6500-fold more potent when administered intracerebroventricularly than intraperitoneal. This chain is Vespryn, found in Crotalus adamanteus (Eastern diamondback rattlesnake).